Here is a 120-residue protein sequence, read N- to C-terminus: Ribosome-binding factor A (120 aa).

It belongs to the RbfA family. In terms of assembly, monomer. Binds 30S ribosomal subunits, but not 50S ribosomal subunits or 70S ribosomes.

It localises to the cytoplasm. Functionally, one of several proteins that assist in the late maturation steps of the functional core of the 30S ribosomal subunit. Associates with free 30S ribosomal subunits (but not with 30S subunits that are part of 70S ribosomes or polysomes). Required for efficient processing of 16S rRNA. May interact with the 5'-terminal helix region of 16S rRNA. This is Ribosome-binding factor A from Campylobacter jejuni subsp. jejuni serotype O:6 (strain 81116 / NCTC 11828).